Here is a 413-residue protein sequence, read N- to C-terminus: Unsaturated 3S-rhamnoglycuronyl hydrolase (413 aa).

A signal peptide spans 1–21 (MNHTKLKLSAVALTLALGLSA). Cysteine 22 is lipidated: N-palmitoyl cysteine. Residue cysteine 22 is the site of S-diacylglycerol cysteine attachment. Catalysis depends on aspartate 203, which acts as the Proton donor.

This sequence belongs to the glycosyl hydrolase 105 family.

Its subcellular location is the cell membrane. Its function is as follows. Glucuronyl hydrolase involved in ulvan degradation. Ulvan is the main polysaccharide component of the Ulvales (green seaweed) cell wall. It is composed of disaccharide building blocks comprising 3-sulfated rhamnose (Rha3S) linked to D-glucuronic acid (GlcA), L-iduronic acid (IduA), or D-xylose (Xyl). Unsaturated 3S-rhamnoglycuronyl hydrolase works together with ulvan lyases to fully degrade the ulvan polymer, catalyzing specifically the cleavage of the unsaturated 4-deoxy-L-threo-hex-4-enopyranosiduronic acid (deltaUA) of the deltaUA-oligosaccharides deltaUA-Rha3S, deltaUA-Rha3S-IduA-Rha3S and deltaUA-Rha3S-Xyl-Rha3S, the end products of the ulvan lyase reaction. This chain is Unsaturated 3S-rhamnoglycuronyl hydrolase, found in Alteromonas sp. (strain LOR).